The sequence spans 63 residues: Large ribosomal subunit protein uL29 (63 aa).

Belongs to the universal ribosomal protein uL29 family.

This Glaesserella parasuis serovar 5 (strain SH0165) (Haemophilus parasuis) protein is Large ribosomal subunit protein uL29.